The sequence spans 166 residues: CDP-archaeol synthase (166 aa).

Helical transmembrane passes span Ile-39–Ala-59, Ile-61–Ile-81, Glu-104–Phe-124, and Ile-127–Leu-147.

The protein belongs to the CDP-archaeol synthase family. Requires Mg(2+) as cofactor.

It is found in the cell membrane. The enzyme catalyses 2,3-bis-O-(geranylgeranyl)-sn-glycerol 1-phosphate + CTP + H(+) = CDP-2,3-bis-O-(geranylgeranyl)-sn-glycerol + diphosphate. It participates in membrane lipid metabolism; glycerophospholipid metabolism. Catalyzes the formation of CDP-2,3-bis-(O-geranylgeranyl)-sn-glycerol (CDP-archaeol) from 2,3-bis-(O-geranylgeranyl)-sn-glycerol 1-phosphate (DGGGP) and CTP. This reaction is the third ether-bond-formation step in the biosynthesis of archaeal membrane lipids. The sequence is that of CDP-archaeol synthase from Methanospirillum hungatei JF-1 (strain ATCC 27890 / DSM 864 / NBRC 100397 / JF-1).